The following is a 266-amino-acid chain: Proteasome subunit beta type-7 (266 aa).

The propeptide at 1-34 (MENLNRGGFDFDLCNRNNVLEKTGLRMKGFMKTG) is removed in mature form. Catalysis depends on Thr-35, which acts as the Nucleophile.

This sequence belongs to the peptidase T1B family. As to quaternary structure, the 26S proteasome consists of a 20S proteasome core and two 19S regulatory subunits. The 20S proteasome core is composed of 28 subunits that are arranged in four stacked rings, resulting in a barrel-shaped structure. The two end rings are each formed by seven alpha subunits, and the two central rings are each formed by seven beta subunits. The catalytic chamber with the active sites is on the inside of the barrel.

Its subcellular location is the cytoplasm. It is found in the nucleus. It carries out the reaction Cleavage of peptide bonds with very broad specificity.. Functionally, the proteasome is a multicatalytic proteinase complex which is characterized by its ability to cleave peptides with Arg, Phe, Tyr, Leu, and Glu adjacent to the leaving group at neutral or slightly basic pH. The proteasome has an ATP-dependent proteolytic activity. The protein is Proteasome subunit beta type-7 (psmB7) of Dictyostelium discoideum (Social amoeba).